The chain runs to 75 residues: MSGCGCGSSCNCGDSCKCNKRSSGLSYSEMETTETVILGVGPAKIQFEGAEMSAASEDGGCKCGDNCTCDPCNCK.

It belongs to the metallothionein superfamily. Type 15 family.

Functionally, metallothioneins have a high content of cysteine residues that bind various heavy metals. This is Metallothionein-like protein 1 (MTA) from Pisum sativum (Garden pea).